A 439-amino-acid chain; its full sequence is uncharacterized protein (439 aa).

The segment covering glutamine 268 to valine 284 has biased composition (low complexity). The disordered stretch occupies residues glutamine 268–histidine 439. Residues glutamine 285–proline 328 are compositionally biased toward pro residues. Over residues glutamine 350–histidine 439 the composition is skewed to low complexity.

This is an uncharacterized protein from Dictyostelium discoideum (Social amoeba).